Reading from the N-terminus, the 1699-residue chain is Cilia- and flagella-associated protein 61 (1699 aa).

Positions 1-22 (MYSNNQLDNPNHSRSQYRNGDQ) are enriched in polar residues. 3 disordered regions span residues 1–23 (MYSNNQLDNPNHSRSQYRNGDQS), 489–515 (QLKRPQKKVTKRPKRQKEEDKKEDEFK), and 1340–1365 (ERDANSENADKGFDDTQSRDGDEENQ). Positions 489 to 503 (QLKRPQKKVTKRPKR) are enriched in basic residues. 2 stretches are compositionally biased toward basic and acidic residues: residues 504 to 515 (QKEEDKKEDEFK) and 1340 to 1359 (ERDANSENADKGFDDTQSRD).

It localises to the cell projection. It is found in the cilium. In terms of biological role, as component of a spoke-associated complex, regulates ciliary mobility by mediating a stable and functional assembly of the radial spoke 3 (RS3). The protein is Cilia- and flagella-associated protein 61 of Tetrahymena thermophila (strain SB210).